Reading from the N-terminus, the 1020-residue chain is MMSFGGADALLGAPFAPLHGGGSLHYALARKGGAGGTRSAAGSSSGFHSWTRTSVSSVSASPSRFRGAGAASSTDSLDTLSNGPEGCMVAVATSRSEKEQLQALNDRFAGYIDKVRQLEAHNRSLEGEAAALRQQQAGRSAMGELYEREVREMRGAVLRLGAARGQLRLEQEHLLEDIAHVRQRLDDEARQREEAEAAARALARFAQEAEAARVDLQKKAQALQEECGYLRRHHQEEVGELLGQIQGSGAAQAQMQAETRDALKCDVTSALREIRAQLEGHAVQSTLQSEEWFRVRLDRLSEAAKVNTDAMRSAQEEITEYRRQLQARTTELEALKSTKDSLERQRSELEDRHQADIASYQEAIQQLDAELRNTKWEMAAQLREYQDLLNVKMALDIEIAAYRKLLEGEECRIGFGPIPFSLPEGLPKIPSVSTHIKVKSEEKIKVVEKSEKETVIVEEQTEETQVTEEVTEEEEKEAKEEEGKEEEGGEEEEAEGGEEETKSPPAEEAASPEKEAKSPVKEEAKSPAEAKSPEKEEAKSPAEVKSPEKAKSPAKEEAKSPPEAKSPEKEEAKSPAEVKSPEKAKSPAKEEAKSPAEAKSPEKAKSPVKEEAKSPAEAKSPVKEEAKSPAEVKSPEKAKSPTKEEAKSPEKAKSPEKEEAKSPEKAKSPVKAEAKSPEKAKSPVKAEAKSPEKAKSPVKEEAKSPEKAKSPVKEEAKSPEKAKSPVKEEAKTPEKAKSPVKEEAKSPEKAKSPEKAKTLDVKSPEAKTPAKEEARSPADKFPEKAKSPVKEEVKSPEKAKSPLKEDAKAPEKEIPKKEEVKSPVKEEEKPQEVKVKEPPKKAEEEKAPATPKTEEKKDSKKEEAPKKEAPKPKVEEKKEPAVEKPKESKVEAKKEEAEDKKKVPTPEKEAPAKVEVKEDAKPKEKTEVAKKEPDDAKAKEPSKPAEKKEAAPEKKDTKEEKAKKPEEKPKTEAKAKEDDKTLSKEPSKPKAEKAEKSSSTDQKDSKPPEKATEDKAAKGK.

The head stretch occupies residues 1 to 100 (MMSFGGADAL…VATSRSEKEQ (100 aa)). The segment at 58–83 (VSASPSRFRGAGAASSTDSLDTLSNG) is disordered. Over residues 71 to 82 (ASSTDSLDTLSN) the composition is skewed to polar residues. Residues Ser76 and Ser124 each carry the phosphoserine modification. Residues 97–413 (EKEQLQALND…KLLEGEECRI (317 aa)) form the IF rod domain. The interval 101-132 (LQALNDRFAGYIDKVRQLEAHNRSLEGEAAAL) is coil 1A. The interval 133-145 (RQQQAGRSAMGEL) is linker 1. Residues 146–244 (YEREVREMRG…QEEVGELLGQ (99 aa)) are coil 1B. Positions 245–266 (IQGSGAAQAQMQAETRDALKCD) are linker 12. Positions 267–288 (VTSALREIRAQLEGHAVQSTLQ) are coil 2A. The linker 2 stretch occupies residues 289-292 (SEEW). A coil 2B region spans residues 293–413 (FRVRLDRLSE…KLLEGEECRI (121 aa)). Residues Ser347 and Ser421 each carry the phosphoserine modification. A tail region spans residues 414-1020 (GFGPIPFSLP…ATEDKAAKGK (607 aa)). The interval 456–1020 (IVEEQTEETQ…ATEDKAAKGK (565 aa)) is disordered. Acidic residues-rich tracts occupy residues 459–475 (EQTEETQVTEEVTEEEE) and 483–498 (GKEEEGGEEEEAEGGE). A phosphoserine mark is found at Ser511, Ser526, Ser532, Ser540, Ser546, Ser552, Ser560, Ser566, Ser574, Ser580, Ser586, Ser594, Ser600, Ser606, Ser614, Ser620, Ser628, Ser634, Ser640, Ser648, Ser654, Ser662, Ser668, Ser676, Ser682, Ser690, Ser696, and Ser704. The span at 511-1020 (SPEKEAKSPV…ATEDKAAKGK (510 aa)) shows a compositional bias: basic and acidic residues. Tandem repeats lie at residues 525-530 (KSPAEA), 531-536 (KSPEKE), 539-544 (KSPAEV), and 545-550 (KSPEKA). A 30 X 6 AA repeats of K-S-P-[AEPV]-[EAK]-[AEVK] region spans residues 525–826 (KSPAEAKSPE…KEEVKSPVKE (302 aa)). Copy 5 of the repeat occupies 559 to 564 (KSPPEA). A run of 2 repeats spans residues 573 to 578 (KSPAEV) and 579 to 584 (KSPEKA). 2 repeat units span residues 593–598 (KSPAEA) and 599–604 (KSPEKA). Repeat unit 10 spans residues 613–618 (KSPAEA). A run of 4 repeats spans residues 627 to 632 (KSPAEV), 633 to 638 (KSPEKA), 639 to 644 (KSPTKE), and 647 to 652 (KSPEKA). Repeat copies occupy residues 661–666 (KSPEKA), 667–672 (KSPVKA), 675–680 (KSPEKA), 681–686 (KSPVKA), 689–694 (KSPEKA), 695–700 (KSPVKE), 703–708 (KSPEKA), 709–714 (KSPVKE), 717–722 (KSPEKA), 723–728 (KSPVKE), 737–742 (KSPVKE), and 745–750 (KSPEKA). Phosphoserine occurs at positions 718, 724, and 738. Phosphoserine occurs at positions 752 and 763. Repeat 27 spans residues 762–767 (KSPEAK). Thr768 bears the Phosphothreonine mark. 3 repeat units span residues 786–791 (KSPVKE), 794–799 (KSPEKA), and 821–826 (KSPVKE). A phosphoserine mark is found at Ser787, Ser795, Ser822, and Ser888.

Belongs to the intermediate filament family. In terms of assembly, forms heterodimers with NEFL; which can further hetero-oligomerize (in vitro). Forms heterodimers with INA (in vitro). Post-translationally, there are a number of repeats of the tripeptide K-S-P, NFH is phosphorylated on a number of the serines in this motif. It is thought that phosphorylation of NFH results in the formation of interfilament cross bridges that are important in the maintenance of axonal caliber. In terms of processing, phosphorylation seems to play a major role in the functioning of the larger neurofilament polypeptides (NF-M and NF-H), the levels of phosphorylation being altered developmentally and coincidentally with a change in the neurofilament function. Phosphorylated in the head and rod regions by the PKC kinase PKN1, leading to the inhibition of polymerization.

Its subcellular location is the cytoplasm. It localises to the cytoskeleton. The protein localises to the cell projection. It is found in the axon. In terms of biological role, neurofilaments usually contain three intermediate filament proteins: NEFL, NEFM, and NEFH which are involved in the maintenance of neuronal caliber. NEFH has an important function in mature axons that is not subserved by the two smaller NF proteins. May additionally cooperate with the neuronal intermediate filament proteins PRPH and INA to form neuronal filamentous networks. This Homo sapiens (Human) protein is Neurofilament heavy polypeptide (NEFH).